The primary structure comprises 555 residues: Cyclin-T1.2 (555 aa).

Disordered stretches follow at residues 315–429 (SYKG…NSSK) and 505–555 (PADS…GELV). Positions 321–335 (KPLSNSSDSPSTRPS) are enriched in low complexity. Basic and acidic residues predominate over residues 341-359 (KNQKVVEQELMEQRMKEAA). Positions 382–398 (TSSSASNNSNHQNRSSS) are enriched in low complexity. Residues 521 to 543 (PDEPSPPVSQILLPPPPPPPILP) show a composition bias toward pro residues.

It belongs to the cyclin family. Cyclin C subfamily.

Regulatory subunit of the cyclin-dependent kinase pair (CDK9/cyclin T) complex, also called positive transcription elongation factor B (P-TEFb), which is proposed to facilitate the transition from abortive to production elongation by phosphorylating the CTD (carboxy-terminal domain) of the large subunit of RNA polymerase II (RNAP II). This Caenorhabditis elegans protein is Cyclin-T1.2 (cit-1.2).